The primary structure comprises 104 residues: Large ribosomal subunit protein bL21 (104 aa).

The protein belongs to the bacterial ribosomal protein bL21 family. Part of the 50S ribosomal subunit. Contacts protein L20.

Functionally, this protein binds to 23S rRNA in the presence of protein L20. The protein is Large ribosomal subunit protein bL21 of Desulfosudis oleivorans (strain DSM 6200 / JCM 39069 / Hxd3) (Desulfococcus oleovorans).